Consider the following 301-residue polypeptide: Alpha-ketoglutarate-dependent sulfate ester dioxygenase (301 aa).

Histidine 81 is a binding site for substrate. Fe cation contacts are provided by histidine 108 and aspartate 110. Substrate is bound at residue valine 111. Threonine 135 lines the 2-oxoglutarate pocket. Histidine 264 provides a ligand contact to Fe cation. The 2-oxoglutarate site is built by arginine 275 and arginine 279.

It belongs to the TfdA dioxygenase family. In terms of assembly, homotetramer. Fe(2+) serves as cofactor.

It carries out the reaction a primary linear alkyl sulfate ester + 2-oxoglutarate + O2 = an aldehyde + sulfate + succinate + CO2 + H(+). It catalyses the reaction 2-ethylhexyl sulfate + 2-oxoglutarate + O2 = 2-ethylhexanal + sulfate + succinate + CO2 + H(+). The enzyme catalyses decyl sulfate + 2-oxoglutarate + O2 = decanal + sulfate + succinate + CO2 + H(+). The catalysed reaction is hexyl sulfate + 2-oxoglutarate + O2 = hexanal + sulfate + succinate + CO2 + H(+). It carries out the reaction nonyl sufate + 2-oxoglutarate + O2 = nonanal + sulfate + succinate + CO2 + H(+). With respect to regulation, strongly stimulated by ascorbate. Functionally, catalyzes the oxygenolytic cleavage of 2-ethylhexyl sulfate (2-EHS) in the presence of alpha-ketoglutarate to yield 2-ethyl-hexanal and succinate, the decarboxylated form of alpha-ketoglutarate. It can accept a wide range of alpha-keto acids including 2-oxo-valerate, 2-oxo-adipate, 2-oxo-octanoate, 3-methyl-2-oxo-butyrate, oxaloacetate-alpha-ketoadipate, and alpha-ketooctanoate. It can catalyze the cleavage of medium-chain alkyl sulfate esters such as butylsulfate, pentylsulfate, hexylsulfate, heptylsulfate, octylsulfate, nonylsulfate, decylsulfate and sodium dodecyl sulfate (SDS). This Pseudomonas putida (Arthrobacter siderocapsulatus) protein is Alpha-ketoglutarate-dependent sulfate ester dioxygenase.